Reading from the N-terminus, the 546-residue chain is Chaperonin GroEL 1 (546 aa).

Residues 30-33 (TLGP), lysine 51, 87-91 (DGTTT), glycine 415, 479-481 (NAA), and aspartate 495 each bind ATP. Residues 526–546 (KEDAPMPGGMPGGMGGMGMDM) form a disordered region. Gly residues predominate over residues 534–546 (GMPGGMGGMGMDM).

This sequence belongs to the chaperonin (HSP60) family. Forms a cylinder of 14 subunits composed of two heptameric rings stacked back-to-back. Interacts with the co-chaperonin GroES.

The protein localises to the cytoplasm. The catalysed reaction is ATP + H2O + a folded polypeptide = ADP + phosphate + an unfolded polypeptide.. Functionally, together with its co-chaperonin GroES, plays an essential role in assisting protein folding. The GroEL-GroES system forms a nano-cage that allows encapsulation of the non-native substrate proteins and provides a physical environment optimized to promote and accelerate protein folding. This chain is Chaperonin GroEL 1, found in Burkholderia pseudomallei (strain K96243).